Here is a 483-residue protein sequence, read N- to C-terminus: Cobyric acid synthase (483 aa).

A GATase cobBQ-type domain is found at 248–434 (ALRVVVPVLP…LHGLFEQPSA (187 aa)). The Nucleophile role is filled by Cys-329. The active site involves His-426.

This sequence belongs to the CobB/CobQ family. CobQ subfamily.

The protein operates within cofactor biosynthesis; adenosylcobalamin biosynthesis. Functionally, catalyzes amidations at positions B, D, E, and G on adenosylcobyrinic A,C-diamide. NH(2) groups are provided by glutamine, and one molecule of ATP is hydrogenolyzed for each amidation. The chain is Cobyric acid synthase from Ectopseudomonas mendocina (strain ymp) (Pseudomonas mendocina).